The chain runs to 203 residues: ATP-dependent Clp protease proteolytic subunit 2 (203 aa).

S98 serves as the catalytic Nucleophile. The active site involves H123.

The protein belongs to the peptidase S14 family. As to quaternary structure, fourteen ClpP subunits assemble into 2 heptameric rings which stack back to back to give a disk-like structure with a central cavity, resembling the structure of eukaryotic proteasomes.

It is found in the cytoplasm. It carries out the reaction Hydrolysis of proteins to small peptides in the presence of ATP and magnesium. alpha-casein is the usual test substrate. In the absence of ATP, only oligopeptides shorter than five residues are hydrolyzed (such as succinyl-Leu-Tyr-|-NHMec, and Leu-Tyr-Leu-|-Tyr-Trp, in which cleavage of the -Tyr-|-Leu- and -Tyr-|-Trp bonds also occurs).. In terms of biological role, cleaves peptides in various proteins in a process that requires ATP hydrolysis. Has a chymotrypsin-like activity. Plays a major role in the degradation of misfolded proteins. In Chlamydia trachomatis serovar A (strain ATCC VR-571B / DSM 19440 / HAR-13), this protein is ATP-dependent Clp protease proteolytic subunit 2.